A 483-amino-acid polypeptide reads, in one-letter code: Nuc-1 negative regulatory protein preg (483 aa).

Composition is skewed to low complexity over residues 1–32, 60–80, and 176–200; these read MLTR…PRPS, SSRR…PISI, and ASAL…AVAV. 3 disordered regions span residues 1–112, 164–234, and 434–483; these read MLTR…SRPQ, NTVG…SQGD, and CPEP…RHAT. A compositionally biased stretch (acidic residues) spans 435–473; that stretch reads PEPEEADDEDEDEELDESDAIGDDDDDIDGEGGEREEET.

The protein belongs to the cyclin family.

Functionally, negative regulator, together with pgov, of the transcriptional activator nuc-1, which controls the expression of phosphorous acquisition enzymes. This is Nuc-1 negative regulatory protein preg (preg) from Neurospora crassa (strain ATCC 24698 / 74-OR23-1A / CBS 708.71 / DSM 1257 / FGSC 987).